We begin with the raw amino-acid sequence, 151 residues long: Arginine repressor (151 aa).

This sequence belongs to the ArgR family.

It is found in the cytoplasm. Its pathway is amino-acid biosynthesis; L-arginine biosynthesis [regulation]. Regulates arginine biosynthesis genes. This is Arginine repressor from Enterococcus faecalis (strain ATCC 700802 / V583).